The primary structure comprises 176 residues: Ribosome maturation factor RimM (176 aa).

One can recognise a PRC barrel domain in the interval 97–176; sequence EDEFYWRDLI…QILVDWDPDF (80 aa).

The protein belongs to the RimM family. In terms of assembly, binds ribosomal protein uS19.

The protein resides in the cytoplasm. In terms of biological role, an accessory protein needed during the final step in the assembly of 30S ribosomal subunit, possibly for assembly of the head region. Essential for efficient processing of 16S rRNA. May be needed both before and after RbfA during the maturation of 16S rRNA. It has affinity for free ribosomal 30S subunits but not for 70S ribosomes. This Shewanella sp. (strain ANA-3) protein is Ribosome maturation factor RimM.